The primary structure comprises 152 residues: Xanthine-guanine phosphoribosyltransferase (152 aa).

5-phospho-alpha-D-ribose 1-diphosphate contacts are provided by residues arginine 37–glycine 38, arginine 69, and aspartate 88–threonine 96. Arginine 69 is a binding site for GMP. Aspartate 89 contacts Mg(2+). Residues aspartate 92 and isoleucine 135 each contribute to the guanine site. Positions 92 and 135 each coordinate xanthine. Residues aspartate 92 to threonine 96 and tryptophan 134 to isoleucine 135 contribute to the GMP site.

The protein belongs to the purine/pyrimidine phosphoribosyltransferase family. XGPT subfamily. Homotetramer. Mg(2+) serves as cofactor.

Its subcellular location is the cell inner membrane. It catalyses the reaction GMP + diphosphate = guanine + 5-phospho-alpha-D-ribose 1-diphosphate. It carries out the reaction XMP + diphosphate = xanthine + 5-phospho-alpha-D-ribose 1-diphosphate. The enzyme catalyses IMP + diphosphate = hypoxanthine + 5-phospho-alpha-D-ribose 1-diphosphate. It participates in purine metabolism; GMP biosynthesis via salvage pathway; GMP from guanine: step 1/1. Its pathway is purine metabolism; XMP biosynthesis via salvage pathway; XMP from xanthine: step 1/1. In terms of biological role, purine salvage pathway enzyme that catalyzes the transfer of the ribosyl-5-phosphate group from 5-phospho-alpha-D-ribose 1-diphosphate (PRPP) to the N9 position of the 6-oxopurines guanine and xanthine to form the corresponding ribonucleotides GMP (guanosine 5'-monophosphate) and XMP (xanthosine 5'-monophosphate), with the release of PPi. To a lesser extent, also acts on hypoxanthine. This chain is Xanthine-guanine phosphoribosyltransferase, found in Citrobacter koseri (strain ATCC BAA-895 / CDC 4225-83 / SGSC4696).